A 296-amino-acid polypeptide reads, in one-letter code: Endonuclease 5 (296 aa).

The signal sequence occupies residues 1–20 (MRLWIVSVLVLTHLVHGALC). A divalent metal cation-binding residues include tryptophan 21 and histidine 26. Position 21-26 (21-26 (WGKDGH)) interacts with substrate. An intrachain disulfide couples cysteine 30 to cysteine 62. Residues aspartate 66 and histidine 81 each coordinate a divalent metal cation. Residues 66 to 72 (DEIKKLS), 81 to 84 (HYVN), and 91 to 96 (NYEYCR) each bind substrate. Cystine bridges form between cysteine 90-cysteine 243, cysteine 98-cysteine 108, and cysteine 223-cysteine 230. Residues asparagine 115 and tyrosine 133 each contribute to the substrate site. Asparagine 115 carries an N-linked (GlcNAc...) asparagine glycan. N-linked (GlcNAc...) asparagine glycosylation occurs at asparagine 134. A divalent metal cation-binding residues include histidine 144, aspartate 148, and histidine 154. A substrate binding region spans residues 144 to 193 (HYMGDVHQPLHTGFLGDLGGNTIIVNWYHNKSNLHHVWDNMIIDSALETY). An N-linked (GlcNAc...) asparagine glycan is attached at asparagine 173. A divalent metal cation-binding residues include histidine 178 and aspartate 182. Asparagine 195 is a glycosylation site (N-linked (GlcNAc...) asparagine). A propeptide spans 281–296 (ATLNRIFSAKPKLAGL) (removed in mature form).

It belongs to the nuclease type I family. Monomer. It depends on Zn(2+) as a cofactor.

It carries out the reaction Endonucleolytic cleavage to 5'-phosphomononucleotide and 5'-phosphooligonucleotide end-products.. In terms of biological role, hydrolyzes, with low efficiency, only single-stranded DNA and RNA without apparent specificity for bases. Endonuclease that recognizes and cleaves some mismatches with high efficiency, including heteroduplex double-stranded DNA; mostly efficient on T/G, A/G and G/G mismatches, less efficient for T/T and poorly efficient for C/C, A/A, T/C and A/C. The polypeptide is Endonuclease 5 (Arabidopsis thaliana (Mouse-ear cress)).